A 250-amino-acid chain; its full sequence is Lymphocyte function-associated antigen 3 (250 aa).

The signal sequence occupies residues 1-28 (MVAGSDAGRALGVLSVVCLLHCFGFISC). The Extracellular segment spans residues 29–215 (FSQQIYGVVY…IPSSGHSRHR (187 aa)). The Ig-like domain maps to 30 to 121 (SQQIYGVVYG…DTMKFFLYVL (92 aa)). Asparagine 40, asparagine 94, asparagine 109, asparagine 135, asparagine 169, and asparagine 195 each carry an N-linked (GlcNAc...) asparagine glycan. A disulfide bond links cysteine 142 and cysteine 187. The helical transmembrane segment at 216 to 238 (YALIPIPLAVITTCIVLYMNGIL) threads the bilayer. The Cytoplasmic segment spans residues 239 to 250 (KCDRKPDRTNSN).

In terms of assembly, interacts with CD2. Interacts with CMTM6. (Microbial infection) Interacts with human cytomegalovirus protein UL148; this interaction retains immature CD58 intracellularly.

The protein resides in the cell membrane. Ligand of the T-lymphocyte CD2 glycoprotein. This interaction is important in mediating thymocyte interactions with thymic epithelial cells, antigen-independent and -dependent interactions of T-lymphocytes with target cells and antigen-presenting cells and the T-lymphocyte rosetting with erythrocytes. In addition, the LFA-3/CD2 interaction may prime response by both the CD2+ and LFA-3+ cells. This Homo sapiens (Human) protein is Lymphocyte function-associated antigen 3 (CD58).